The primary structure comprises 695 residues: Spermidine/spermine N(1)-acetyltransferase-like protein 1 (695 aa).

Polar residues-rich tracts occupy residues 1-39 (MNQS…QGSA), 52-68 (PSMS…NLPD), and 78-98 (DTWQ…SQLV). Disordered regions lie at residues 1–274 (MNQS…MNQM), 290–332 (DMKQ…PGMW), 344–375 (ASIS…NQSG), and 387–493 (RQSG…GLSQ). Residues 105–122 (SQPDPSQPGPSQSGPSQS) show a composition bias toward low complexity. 7 stretches are compositionally biased toward polar residues: residues 123–179 (RMRQ…TGLS), 197–208 (GVQQPGISQQVP), 231–266 (PDTS…QPSP), 294–310 (PSMS…NLPD), 355–375 (APSQ…NQSG), 389–422 (SGGS…TGLS), and 459–471 (PGTS…QTGM). In terms of domain architecture, N-acetyltransferase spans 529–695 (FQIRHAEAGD…EELLDMAWEE (167 aa)). 552-553 (CE) contributes to the substrate binding site. Residues 618 to 620 (FYV) and 626 to 631 (GLGIGA) each bind acetyl-CoA. Substrate is bound by residues 650–652 (HFL) and Glu676.

It belongs to the acetyltransferase family.

The protein is Spermidine/spermine N(1)-acetyltransferase-like protein 1 (SATL1) of Homo sapiens (Human).